A 159-amino-acid polypeptide reads, in one-letter code: uncharacterized protein (159 aa).

Disordered regions lie at residues 1 to 23 and 91 to 110; these read MEQD…KGQA and AGGG…GPAA.

This is an uncharacterized protein from Homo sapiens (Human).